Consider the following 293-residue polypeptide: 4-hydroxy-tetrahydrodipicolinate synthase (293 aa).

T45 provides a ligand contact to pyruvate. Y133 functions as the Proton donor/acceptor in the catalytic mechanism. Residue K161 is the Schiff-base intermediate with substrate of the active site. A pyruvate-binding site is contributed by I203.

It belongs to the DapA family. Homotetramer; dimer of dimers.

The protein resides in the cytoplasm. It carries out the reaction L-aspartate 4-semialdehyde + pyruvate = (2S,4S)-4-hydroxy-2,3,4,5-tetrahydrodipicolinate + H2O + H(+). It functions in the pathway amino-acid biosynthesis; L-lysine biosynthesis via DAP pathway; (S)-tetrahydrodipicolinate from L-aspartate: step 3/4. Catalyzes the condensation of (S)-aspartate-beta-semialdehyde [(S)-ASA] and pyruvate to 4-hydroxy-tetrahydrodipicolinate (HTPA). The protein is 4-hydroxy-tetrahydrodipicolinate synthase of Pseudoalteromonas atlantica (strain T6c / ATCC BAA-1087).